Reading from the N-terminus, the 375-residue chain is Nucleolysin TIAR (375 aa).

2 RRM domains span residues 9–85 (RTLY…WATT) and 97–175 (FHVF…WATR). The residue at position 122 (Lys122) is an N6-acetyllysine. Ser201 carries the post-translational modification Phosphoserine. In terms of domain architecture, RRM 3 spans 205 to 277 (CTVYCGGIAS…HVVKCYWGKE (73 aa)). A disordered region spans residues 345–375 (FGAQPPQGQAPPPVIPPPNQAGYGMASYQTQ). The span at 352 to 363 (GQAPPPVIPPPN) shows a compositional bias: pro residues.

Interacts with FASTK. Phosphorylated by MAPK14 following DNA damage, releasing TIAR from GADD45A mRNA. Expressed in brain, heart, kidney, lung and skeletal muscle.

Its subcellular location is the nucleus. The protein localises to the cytoplasm. It is found in the cytolytic granule. It localises to the stress granule. RNA-binding protein involved in alternative pre-RNA splicing and in cytoplasmic stress granules formation. Shows a preference for uridine-rich RNAs. Activates splicing of alternative exons with weak 5' splice sites followed by a U-rich stretch on its own pre-mRNA and on TIA1 mRNA. Promotes the inclusion of TIA1 exon 5 to give rise to the long isoform (isoform a) of TIA1. Acts downstream of the stress-induced phosphorylation of EIF2S1/EIF2A to promote the recruitment of untranslated mRNAs to cytoplasmic stress granules (SG). Possesses nucleolytic activity against cytotoxic lymphocyte target cells. May be involved in apoptosis. The chain is Nucleolysin TIAR (TIAL1) from Homo sapiens (Human).